The following is a 145-amino-acid chain: Maximins 3/H9 type 1 (145 aa).

Residues 1–18 form the signal peptide; sequence MNFKYIVAVSFLIASAYA. 2 propeptides span residues 19-43 and 74-124; these read RSVQ…LREI and RTAE…KEKR. The residue at position 144 (I144) is an Isoleucine amide.

It belongs to the bombinin family. Expressed by the skin glands.

The protein resides in the secreted. Maximin-3 shows antibacterial activity against both Gram-positive and Gram-negative bacteria. It also shows antimicrobial activity against the fungus C.albicans, but not against A.flavus nor P.uticale. It has little hemolytic activity. It possess a significant cytotoxicity against tumor cell lines. It possess a significant anti-HIV activity. It shows high spermicidal activity. Its function is as follows. Maximin-H9 shows antimicrobial activity against bacteria and against the fungus C.albicans. Shows strong hemolytic activity. The protein is Maximins 3/H9 type 1 of Bombina maxima (Giant fire-bellied toad).